The following is a 262-amino-acid chain: Acyl-[acyl-carrier-protein]--UDP-N-acetylglucosamine O-acyltransferase (262 aa).

The protein belongs to the transferase hexapeptide repeat family. LpxA subfamily. As to quaternary structure, homotrimer.

The protein resides in the cytoplasm. It carries out the reaction a (3R)-hydroxyacyl-[ACP] + UDP-N-acetyl-alpha-D-glucosamine = a UDP-3-O-[(3R)-3-hydroxyacyl]-N-acetyl-alpha-D-glucosamine + holo-[ACP]. It participates in glycolipid biosynthesis; lipid IV(A) biosynthesis; lipid IV(A) from (3R)-3-hydroxytetradecanoyl-[acyl-carrier-protein] and UDP-N-acetyl-alpha-D-glucosamine: step 1/6. Its function is as follows. Involved in the biosynthesis of lipid A, a phosphorylated glycolipid that anchors the lipopolysaccharide to the outer membrane of the cell. This chain is Acyl-[acyl-carrier-protein]--UDP-N-acetylglucosamine O-acyltransferase, found in Erwinia tasmaniensis (strain DSM 17950 / CFBP 7177 / CIP 109463 / NCPPB 4357 / Et1/99).